We begin with the raw amino-acid sequence, 490 residues long: Transcriptional activator/repressor MOT3 (490 aa).

At Met1 the chain carries N-acetylmethionine. 3 disordered regions span residues 1 to 69 (MNAD…NKDD), 101 to 162 (NNNN…HPNQ), and 214 to 267 (NNGN…PQHH). Residues 8-36 (QQQQQQRQQHQQQQHQQQQHQHQHQQQQH) show a composition bias toward low complexity. A compositionally biased stretch (polar residues) spans 37–65 (TILQNVSNTNNIGSDSLASQPFNTTTVSS). Positions 98-295 (NNSNNNNVTA…NLNLNINPAQ (198 aa)) are prion domain (PrD). Low complexity-rich tracts occupy residues 119–128 (NNSNNSNNSN), 138–157 (NNST…NNNN), 214–232 (NNGN…HSAP), and 248–264 (THNN…NNAP). 2 consecutive C2H2-type zinc fingers follow at residues 346–368 (HQCQ…LLSH) and 374–397 (FLCP…KLKH). Residues 421 to 436 (NNNNDNNNNNNSNSAS) show a composition bias toward low complexity. The interval 421–458 (NNNNDNNNNNNSNSASGSGGAGAAAAAATAPENEDGNG) is disordered.

The protein resides in the nucleus. Transcription factor that affects the expression of a large set of genes. Recognizes and binds to the consensus sequence 5'-[CAT]AGG[TC]A-3' in the promoter region. Plays a major role in the repression of a specific subset of hypoxic genes (e.g. ANB1, DAN1 and HEM13) under aerobic conditions. Acts synergistically with the transcription factor ROX1 to recruit the general repression complex SSN6-TUP1 to the promoter of hypoxic genes. Represses transcription of ergosterol biosynthetic genes. Negatively regulates pheromone-induced gene expression. Can act as a transcriptional activator (e.g. of genes like CYC1, SUC2 and the Ty long terminal repeat delta promoter). This chain is Transcriptional activator/repressor MOT3 (MOT3), found in Saccharomyces cerevisiae (strain ATCC 204508 / S288c) (Baker's yeast).